A 900-amino-acid chain; its full sequence is Xylanolytic transcriptional activator xlnR (900 aa).

The segment covering 53-71 has biased composition (polar residues); it reads SREGGNSENNSTFKPSSVR. The interval 53–75 is disordered; the sequence is SREGGNSENNSTFKPSSVRDSLA. The zn(2)-C6 fungal-type DNA-binding region spans 98-124; the sequence is CDQCNQLRTKCDGQNPCAHCIEFGLTC. Disordered stretches follow at residues 137 to 169, 520 to 559, and 701 to 722; these read SKKD…QEPG, ELPP…NVTE, and EPPE…STVG. Residues 531 to 542 are compositionally biased toward basic and acidic residues; the sequence is DGERENEGDNPS. Residues 543–557 show a composition bias toward polar residues; it reads KRNQSLHGGNSNVNV. Residues 712 to 722 show a composition bias toward low complexity; the sequence is SPSGRSSSTVG.

Belongs to the xlnR/xlr1 family.

Its subcellular location is the nucleus. Transcriptional activator of the xylanolytic system. Involved in the regulation of extracellular cellulolytic and xylanolytic genes and in the regulation of the intracellular activities of D-xylose catabolic genes in the pentose catabolic pathway (PCP) in response to the presence of D-xylose. Binds to the DNA sequence 5'-GGNTAAA-3'. In Emericella nidulans (strain FGSC A4 / ATCC 38163 / CBS 112.46 / NRRL 194 / M139) (Aspergillus nidulans), this protein is Xylanolytic transcriptional activator xlnR (xlnR).